A 137-amino-acid chain; its full sequence is Large ribosomal subunit protein uL13 (137 aa).

Arginine 55 is subject to Citrulline. Phosphoserine is present on serine 73. The residue at position 136 (arginine 136) is a Citrulline.

It belongs to the universal ribosomal protein uL13 family. As to quaternary structure, component of the 60S ribosome. Component of the GAIT complex. Interacts with EIF4G1. In terms of processing, phosphorylation at Ser-73 upon interferon-gamma treatment in macrophages involves a DAPK1-DAPK3 kinase cascade and is causing release from the ribosome, association with the GAIT complex and subsequent involvement in transcript-selective translation inhibition. Citrullinated by PADI4.

The protein resides in the cytoplasm. Functionally, associated with ribosomes but is not required for canonical ribosome function and has extra-ribosomal functions. Component of the GAIT (gamma interferon-activated inhibitor of translation) complex which mediates interferon-gamma-induced transcript-selective translation inhibition in inflammation processes. Upon interferon-gamma activation and subsequent phosphorylation dissociates from the ribosome and assembles into the GAIT complex which binds to stem loop-containing GAIT elements in the 3'-UTR of diverse inflammatory mRNAs (such as ceruplasmin) and suppresses their translation. In the GAIT complex interacts with m7G cap-bound eIF4G at or near the eIF3-binding site and blocks the recruitment of the 43S ribosomal complex. Involved in methylation of rRNA. This chain is Large ribosomal subunit protein uL13 (RPL13A), found in Sus scrofa (Pig).